Reading from the N-terminus, the 636-residue chain is Poly(3-hydroxyalkanoate) polymerase subunit PhaC (636 aa).

Disordered stretches follow at residues 1-38 and 129-152; these read MYNK…DATD and QGTR…KRFS. A compositionally biased stretch (basic and acidic residues) spans 143 to 152; it reads PDTRKDKRFS. Cys-373 is a catalytic residue.

The protein belongs to the PHA/PHB synthase family. Type I PhaC subfamily.

The protein localises to the cytoplasm. It catalyses the reaction (3R)-3-hydroxybutanoyl-CoA + [(3R)-hydroxybutanoate](n) = [(3R)-hydroxybutanoate](n+1) + CoA. Its pathway is biopolymer metabolism; poly-(R)-3-hydroxybutanoate biosynthesis. Its function is as follows. Polymerizes D(-)-3-hydroxybutyryl-CoA to create PHB which consists of thousands of hydroxybutyrate molecules linked end to end. PHB serves as an intracellular energy reserve material when cells grow under conditions of nutrient limitation. This is Poly(3-hydroxyalkanoate) polymerase subunit PhaC from Rhizobium etli (strain ATCC 51251 / DSM 11541 / JCM 21823 / NBRC 15573 / CFN 42).